The primary structure comprises 255 residues: Triosephosphate isomerase (255 aa).

10–12 (NWK) serves as a coordination point for substrate. His-96 functions as the Electrophile in the catalytic mechanism. The active-site Proton acceptor is Glu-168. Substrate-binding positions include Gly-174, Ser-213, and 234 to 235 (GG).

It belongs to the triosephosphate isomerase family. As to quaternary structure, homodimer.

It is found in the cytoplasm. It carries out the reaction D-glyceraldehyde 3-phosphate = dihydroxyacetone phosphate. Its pathway is carbohydrate biosynthesis; gluconeogenesis. It participates in carbohydrate degradation; glycolysis; D-glyceraldehyde 3-phosphate from glycerone phosphate: step 1/1. Functionally, involved in the gluconeogenesis. Catalyzes stereospecifically the conversion of dihydroxyacetone phosphate (DHAP) to D-glyceraldehyde-3-phosphate (G3P). The polypeptide is Triosephosphate isomerase (Histophilus somni (strain 2336) (Haemophilus somnus)).